The primary structure comprises 610 residues: UvrABC system protein C (610 aa).

One can recognise a GIY-YIG domain in the interval 16 to 94 (SQPGVYRMYD…IKLYQPRYNV (79 aa)). Residues 204-239 (DQVLTQLIARMEKASQDLAFEEAARIRDQIQAVRRV) form the UVR domain.

The protein belongs to the UvrC family. Interacts with UvrB in an incision complex.

The protein localises to the cytoplasm. Its function is as follows. The UvrABC repair system catalyzes the recognition and processing of DNA lesions. UvrC both incises the 5' and 3' sides of the lesion. The N-terminal half is responsible for the 3' incision and the C-terminal half is responsible for the 5' incision. This is UvrABC system protein C from Salmonella paratyphi A (strain ATCC 9150 / SARB42).